The primary structure comprises 542 residues: CTP synthase (542 aa).

The segment at 1–265 is amidoligase domain; that stretch reads MARYVFITGG…DNEVLAAFGI (265 aa). A CTP-binding site is contributed by S13. S13 provides a ligand contact to UTP. ATP-binding positions include 14-19 and D71; that span reads SLGKGI. Residues D71 and E139 each coordinate Mg(2+). CTP-binding positions include 146–148, 186–191, and K222; these read DIE and KTKPTQ. UTP is bound by residues 186-191 and K222; that span reads KTKPTQ. Positions 291–541 constitute a Glutamine amidotransferase type-1 domain; sequence TIAIVGKYTG…IEAALEQSRL (251 aa). G353 contacts L-glutamine. Catalysis depends on C380, which acts as the Nucleophile; for glutamine hydrolysis. Residues 381-384, E404, and R469 contribute to the L-glutamine site; that span reads FGMQ. Active-site residues include H514 and E516.

Belongs to the CTP synthase family. Homotetramer.

The catalysed reaction is UTP + L-glutamine + ATP + H2O = CTP + L-glutamate + ADP + phosphate + 2 H(+). It carries out the reaction L-glutamine + H2O = L-glutamate + NH4(+). It catalyses the reaction UTP + NH4(+) + ATP = CTP + ADP + phosphate + 2 H(+). It participates in pyrimidine metabolism; CTP biosynthesis via de novo pathway; CTP from UDP: step 2/2. With respect to regulation, allosterically activated by GTP, when glutamine is the substrate; GTP has no effect on the reaction when ammonia is the substrate. The allosteric effector GTP functions by stabilizing the protein conformation that binds the tetrahedral intermediate(s) formed during glutamine hydrolysis. Inhibited by the product CTP, via allosteric rather than competitive inhibition. Its function is as follows. Catalyzes the ATP-dependent amination of UTP to CTP with either L-glutamine or ammonia as the source of nitrogen. Regulates intracellular CTP levels through interactions with the four ribonucleotide triphosphates. The chain is CTP synthase from Rhizobium meliloti (strain 1021) (Ensifer meliloti).